The following is a 157-amino-acid chain: Ribosomal RNA large subunit methyltransferase H (157 aa).

S-adenosyl-L-methionine contacts are provided by residues L73, G105, and 124-129 (LSKMTF).

It belongs to the RNA methyltransferase RlmH family. Homodimer.

Its subcellular location is the cytoplasm. The enzyme catalyses pseudouridine(1915) in 23S rRNA + S-adenosyl-L-methionine = N(3)-methylpseudouridine(1915) in 23S rRNA + S-adenosyl-L-homocysteine + H(+). Specifically methylates the pseudouridine at position 1915 (m3Psi1915) in 23S rRNA. The polypeptide is Ribosomal RNA large subunit methyltransferase H (Phocaeicola vulgatus (strain ATCC 8482 / DSM 1447 / JCM 5826 / CCUG 4940 / NBRC 14291 / NCTC 11154) (Bacteroides vulgatus)).